The chain runs to 330 residues: Ketol-acid reductoisomerase (NADP(+)) (330 aa).

One can recognise a KARI N-terminal Rossmann domain in the interval 2–182 (VEIYYDDDAS…GGTRAGALRT (181 aa)). NADP(+)-binding positions include 25–28 (YGSQ), S51, and S53. The active site involves H108. G134 contributes to the NADP(+) binding site. The region spanning 183 to 328 (TFTEETETDL…AKLRPLMSWI (146 aa)) is the KARI C-terminal knotted domain. Mg(2+) contacts are provided by D191, E195, E227, and E231. S252 is a substrate binding site.

This sequence belongs to the ketol-acid reductoisomerase family. The cofactor is Mg(2+).

The catalysed reaction is (2R)-2,3-dihydroxy-3-methylbutanoate + NADP(+) = (2S)-2-acetolactate + NADPH + H(+). It catalyses the reaction (2R,3R)-2,3-dihydroxy-3-methylpentanoate + NADP(+) = (S)-2-ethyl-2-hydroxy-3-oxobutanoate + NADPH + H(+). Its pathway is amino-acid biosynthesis; L-isoleucine biosynthesis; L-isoleucine from 2-oxobutanoate: step 2/4. The protein operates within amino-acid biosynthesis; L-valine biosynthesis; L-valine from pyruvate: step 2/4. Involved in the biosynthesis of branched-chain amino acids (BCAA). Catalyzes an alkyl-migration followed by a ketol-acid reduction of (S)-2-acetolactate (S2AL) to yield (R)-2,3-dihydroxy-isovalerate. In the isomerase reaction, S2AL is rearranged via a Mg-dependent methyl migration to produce 3-hydroxy-3-methyl-2-ketobutyrate (HMKB). In the reductase reaction, this 2-ketoacid undergoes a metal-dependent reduction by NADPH to yield (R)-2,3-dihydroxy-isovalerate. The sequence is that of Ketol-acid reductoisomerase (NADP(+)) from Frankia alni (strain DSM 45986 / CECT 9034 / ACN14a).